A 600-amino-acid polypeptide reads, in one-letter code: Glutamine--fructose-6-phosphate aminotransferase [isomerizing] (600 aa).

Catalysis depends on C2, which acts as the Nucleophile; for GATase activity. Positions 2–217 (CGIVGFIGEQ…DKEIVIVMKE (216 aa)) constitute a Glutamine amidotransferase type-2 domain. 2 SIS domains span residues 283–422 (IRNA…AKGE) and 452–590 (LAKQ…VDKP). Residue K595 is the For Fru-6P isomerization activity of the active site.

In terms of assembly, homodimer.

It localises to the cytoplasm. The enzyme catalyses D-fructose 6-phosphate + L-glutamine = D-glucosamine 6-phosphate + L-glutamate. Functionally, catalyzes the first step in hexosamine metabolism, converting fructose-6P into glucosamine-6P using glutamine as a nitrogen source. The polypeptide is Glutamine--fructose-6-phosphate aminotransferase [isomerizing] (Bacillus anthracis).